A 342-amino-acid chain; its full sequence is N-acetyl-gamma-glutamyl-phosphate reductase (342 aa).

Residue C146 is part of the active site.

The protein belongs to the NAGSA dehydrogenase family. Type 1 subfamily.

Its subcellular location is the cytoplasm. It carries out the reaction N-acetyl-L-glutamate 5-semialdehyde + phosphate + NADP(+) = N-acetyl-L-glutamyl 5-phosphate + NADPH + H(+). It participates in amino-acid biosynthesis; L-arginine biosynthesis; N(2)-acetyl-L-ornithine from L-glutamate: step 3/4. In terms of biological role, catalyzes the NADPH-dependent reduction of N-acetyl-5-glutamyl phosphate to yield N-acetyl-L-glutamate 5-semialdehyde. This Streptomyces avermitilis (strain ATCC 31267 / DSM 46492 / JCM 5070 / NBRC 14893 / NCIMB 12804 / NRRL 8165 / MA-4680) protein is N-acetyl-gamma-glutamyl-phosphate reductase.